Reading from the N-terminus, the 94-residue chain is MNIKPLNDRVAVKYLEEEEKTRSGIVLPDTAKEEKPQQGEIVAVGKGCTPEDGDPEVKVGDLVVFDKYSGTKVTIDGEDYIILNLEDVLAVIEK.

It belongs to the GroES chaperonin family. As to quaternary structure, heptamer of 7 subunits arranged in a ring. Interacts with the chaperonin GroEL.

Its subcellular location is the cytoplasm. In terms of biological role, together with the chaperonin GroEL, plays an essential role in assisting protein folding. The GroEL-GroES system forms a nano-cage that allows encapsulation of the non-native substrate proteins and provides a physical environment optimized to promote and accelerate protein folding. GroES binds to the apical surface of the GroEL ring, thereby capping the opening of the GroEL channel. In Halothermothrix orenii (strain H 168 / OCM 544 / DSM 9562), this protein is Co-chaperonin GroES.